Reading from the N-terminus, the 940-residue chain is Isoleucine--tRNA ligase (940 aa).

The short motif at 58–68 is the 'HIGH' region element; the sequence is PYANGDIHIGH. Glutamate 564 is a binding site for L-isoleucyl-5'-AMP. Positions 605-609 match the 'KMSKS' region motif; sequence KMSKS. An ATP-binding site is contributed by lysine 608. Residues cysteine 903, cysteine 906, cysteine 923, and cysteine 926 each contribute to the Zn(2+) site.

It belongs to the class-I aminoacyl-tRNA synthetase family. IleS type 1 subfamily. As to quaternary structure, monomer. Requires Zn(2+) as cofactor.

The protein resides in the cytoplasm. The enzyme catalyses tRNA(Ile) + L-isoleucine + ATP = L-isoleucyl-tRNA(Ile) + AMP + diphosphate. Functionally, catalyzes the attachment of isoleucine to tRNA(Ile). As IleRS can inadvertently accommodate and process structurally similar amino acids such as valine, to avoid such errors it has two additional distinct tRNA(Ile)-dependent editing activities. One activity is designated as 'pretransfer' editing and involves the hydrolysis of activated Val-AMP. The other activity is designated 'posttransfer' editing and involves deacylation of mischarged Val-tRNA(Ile). The polypeptide is Isoleucine--tRNA ligase (Shewanella piezotolerans (strain WP3 / JCM 13877)).